The chain runs to 260 residues: Phosphonates import ATP-binding protein PhnC 2 (260 aa).

The region spanning Ile4 to Arg245 is the ABC transporter domain. Gly37–Ser44 is a binding site for ATP.

Belongs to the ABC transporter superfamily. Phosphonates importer (TC 3.A.1.9.1) family. As to quaternary structure, the complex is composed of two ATP-binding proteins (PhnC), two transmembrane proteins (PhnE) and a solute-binding protein (PhnD).

Its subcellular location is the cell inner membrane. It carries out the reaction phosphonate(out) + ATP + H2O = phosphonate(in) + ADP + phosphate + H(+). In terms of biological role, part of the ABC transporter complex PhnCDE involved in phosphonates import. Responsible for energy coupling to the transport system. The protein is Phosphonates import ATP-binding protein PhnC 2 of Trichodesmium erythraeum (strain IMS101).